A 363-amino-acid polypeptide reads, in one-letter code: Spermidine/putrescine import ATP-binding protein PotA 2 (363 aa).

The ABC transporter domain maps to 6 to 236; the sequence is LEIRNVTRRF…PRSRFVADFI (231 aa). 38–45 serves as a coordination point for ATP; sequence GPSGCGKT.

Belongs to the ABC transporter superfamily. Spermidine/putrescine importer (TC 3.A.1.11.1) family. As to quaternary structure, the complex is composed of two ATP-binding proteins (PotA), two transmembrane proteins (PotB and PotC) and a solute-binding protein (PotD).

It localises to the cell inner membrane. It carries out the reaction ATP + H2O + polyamine-[polyamine-binding protein]Side 1 = ADP + phosphate + polyamineSide 2 + [polyamine-binding protein]Side 1.. Its function is as follows. Part of the ABC transporter complex PotABCD involved in spermidine/putrescine import. Responsible for energy coupling to the transport system. The sequence is that of Spermidine/putrescine import ATP-binding protein PotA 2 from Pseudomonas aeruginosa (strain ATCC 15692 / DSM 22644 / CIP 104116 / JCM 14847 / LMG 12228 / 1C / PRS 101 / PAO1).